The sequence spans 145 residues: Halilectin 3, alpha chain (145 aa).

A glycan (N-linked (GlcNAc...) asparagine) is linked at Asn73.

In terms of assembly, probable heterotrimer consisting of an alpha chain and two beta chains. The alpha chain can probably have different glycosylation states. In terms of processing, glycosylated.

Lectin with affinity for N-acetyl-galactosamine, carragenan and glycoprotein porcine stomach mucin (PSM). Has metal-independent hemagglutinating activity towards erythrocytes from rabbit and human. Hemagglutinating activity is not inhibited by D-galactose, D-glucose, D-mannose, D-fucose, methyl-alpha-D-galactopyranoside, methyl-alpha-D-glucopyranoside, N-acetyl-glucosamine, N-acetyl-mannosamine, D-fructose, alpha-D-lactose, beta-D-lactose, D-lactulose, D-sucrose, fucoidan or glycoproteins thyroglobulin and ovalmucoid. The protein is Halilectin 3, alpha chain of Haliclona caerulea (Blue Caribbean sponge).